Here is a 378-residue protein sequence, read N- to C-terminus: Mannitol-1-phosphate 5-dehydrogenase (378 aa).

4–15 contributes to the NAD(+) binding site; that stretch reads SVHFGAGNIGRG.

It belongs to the mannitol dehydrogenase family.

The catalysed reaction is D-mannitol 1-phosphate + NAD(+) = beta-D-fructose 6-phosphate + NADH + H(+). In Streptococcus pneumoniae (strain Hungary19A-6), this protein is Mannitol-1-phosphate 5-dehydrogenase.